A 527-amino-acid polypeptide reads, in one-letter code: Ribonuclease Y (527 aa).

Residues 21–41 traverse the membrane as a helical segment; the sequence is ILAIFFSFIIGIVFGGMALFV. The tract at residues 78 to 97 is disordered; sequence READKTRNSAETELKERRSE. Residues 217-302 enclose the KH domain; the sequence is TTNVVPLPSD…EVVTKAKEEV (86 aa). An HD domain is found at 343 to 436; sequence VLQHSIEVAQ…VSAADAISSA (94 aa).

It belongs to the RNase Y family.

Its subcellular location is the cell membrane. Endoribonuclease that initiates mRNA decay. The protein is Ribonuclease Y of Dehalococcoides mccartyi (strain ATCC BAA-2100 / JCM 16839 / KCTC 5957 / BAV1).